We begin with the raw amino-acid sequence, 1011 residues long: Unconventional myosin ID (1011 aa).

The Myosin motor domain occupies 7 to 690 (AGVQDFVLLD…TLFALEHQRN (684 aa)). 100-107 (GESGAGKT) contacts ATP. Positions 567-589 (MADLVVTLLKKEPFYVRCIKPND) are actin-binding. IQ domains lie at 694-714 (PHIVTLLQKRVRGWIVRRNFK) and 716-736 (MKAAITIVRAYKAYKLRSYVQ). A TH1 domain is found at 806–1007 (AGRRPYWGQA…EGNIIFEVPA (202 aa)).

The protein belongs to the TRAFAC class myosin-kinesin ATPase superfamily. Myosin family. In terms of assembly, binds to F-actin. Interacts with arm. Interacts with shg. Interacts with ds (via intracellular region). In the embryo, expressed in gastric caeca, midgut cells of the proventriculus, and in the mid and hindgut. In the larval gut brush border, expression is in the terminal web domain. In the adult gut brush border, expression remains in the web domain and has also moved into the microvilli. Also expressed at low levels in follicle cells during oogenesis.

It is found in the cytoplasm. Its subcellular location is the cell cortex. The protein resides in the cytoskeleton. It localises to the cell membrane. The protein localises to the cell junction. It is found in the adherens junction. Its subcellular location is the cell projection. Unconventional myosin that functions as actin-based motor protein with ATPase activity. Binds to membranes enriched in phosphatidylinositol 4-5-bisphosphate, and can glide along actin filaments when anchored to a lipid bilayer. Generates left-right asymmetry at the level of single cells, organs and the whole body via its interaction with the actin cytoskeleton, both in the embryo and the adult. Normal left-right asymmetry of the larval midgut and hindgut requires expression in the embryonic hindgut epithelium during a critical time period, 10 to 12.75 hours after egg laying. This period corresponds to a late stage of germband retraction, and precedes left-right asymmetric morphogenesis. Expression in segment H1 of the imaginal ring is required at 0 to 24 hours after pupation for changes of cell shape and orientation in the H2 segment, which then gives rise to normal, dextral looping of the adult hindgut. Required during a critical period, 126-132 hours after egg laying, for normal, dextral rotation of the adult male genitalia. Has a double role by promoting dextral rotation in the posterior compartment of segment A8 of the male genital disk, and in repressing sinistral looping in the anterior compartment. The chain is Unconventional myosin ID from Drosophila melanogaster (Fruit fly).